Consider the following 361-residue polypeptide: Versatile peroxidase VPL2 (361 aa).

An N-terminal signal peptide occupies residues 1 to 22 (MSFKTLSALALALGAAVQFASA). The propeptide occupies 23 to 30 (AVPLVQKR). Intrachain disulfides connect Cys-33–Cys-45, Cys-44–Cys-308, Cys-64–Cys-144, and Cys-272–Cys-337. Glu-66 and Glu-70 together coordinate Mn(2+). His-77 functions as the Proton acceptor in the catalytic mechanism. 4 residues coordinate Ca(2+): Asp-78, Gly-90, Asp-92, and Ser-94. Residue Asn-126 is glycosylated (N-linked (GlcNAc...) asparagine). The active-site Tryptophan radical intermediate is the Trp-194. His-199 contributes to the heme b binding site. A Ca(2+)-binding site is contributed by Ser-200. A heme b-binding site is contributed by 203–207 (AADKV). Asp-205 is a binding site for Mn(2+). Ca(2+) is bound by residues Asp-217, Thr-219, Val-222, and Asp-224.

The protein belongs to the peroxidase family. Ligninase subfamily. It depends on heme b as a cofactor. Ca(2+) serves as cofactor.

It localises to the secreted. It carries out the reaction 1-(4-hydroxy-3-methoxyphenyl)-2-(2-methoxyphenoxy)propane-1,3-diol + H2O2 = guaiacol + vanillin + glycolaldehyde + H2O. The catalysed reaction is 2 Mn(2+) + H2O2 + 2 H(+) = 2 Mn(3+) + 2 H2O. In terms of biological role, a versatile ligninolytic peroxidase that combines the substrate specificity characteristics of the two other ligninolytic peroxidases, manganese peroxidase and lignin peroxidase. This is Versatile peroxidase VPL2 (vpl2) from Pleurotus eryngii (Boletus of the steppes).